Here is a 385-residue protein sequence, read N- to C-terminus: Iron uptake system component EfeM (385 aa).

The signal sequence occupies residues 1–22; sequence MNFTKIAVSAGCILALCAGCGA.

It belongs to the EfeM/EfeO family. Component of the iron transporter efeUOB/M complex composed of EfeU, EfeM and EfeB; EfeU is essential for the complex formation.

Its subcellular location is the cell membrane. It localises to the membrane raft. Its function is as follows. Part of the iron transporter system efeUOB/M involved in iron import. Specifically binds Fe(3+), which is produced by EfeB-mediated oxidation of Fe(2+), and delivers it to the cell membrane permease EfeU. This is Iron uptake system component EfeM from Bacillus subtilis (strain 168).